We begin with the raw amino-acid sequence, 863 residues long: Alanine--tRNA ligase (863 aa).

Residues His552, His556, Cys654, and His658 each contribute to the Zn(2+) site.

Belongs to the class-II aminoacyl-tRNA synthetase family. Requires Zn(2+) as cofactor.

It localises to the cytoplasm. It catalyses the reaction tRNA(Ala) + L-alanine + ATP = L-alanyl-tRNA(Ala) + AMP + diphosphate. In terms of biological role, catalyzes the attachment of alanine to tRNA(Ala) in a two-step reaction: alanine is first activated by ATP to form Ala-AMP and then transferred to the acceptor end of tRNA(Ala). Also edits incorrectly charged Ser-tRNA(Ala) and Gly-tRNA(Ala) via its editing domain. This is Alanine--tRNA ligase from Halorhodospira halophila (strain DSM 244 / SL1) (Ectothiorhodospira halophila (strain DSM 244 / SL1)).